The chain runs to 46 residues: Daisho2 (46 aa).

Positions 1 to 22 (MNCLKICGFFFALIAALATAEA) are cleaved as a signal peptide.

As to expression, hemolymph (at protein level).

It is found in the secreted. Functionally, peptide which plays a role in the humoral immune response to a subset of filamentous fungi, including F.oxysporum and F.verticillioides. The chain is Daisho2 from Drosophila melanogaster (Fruit fly).